We begin with the raw amino-acid sequence, 167 residues long: Ureidoglycolate lyase (167 aa).

The protein belongs to the ureidoglycolate lyase family. As to quaternary structure, homodimer. Requires Ni(2+) as cofactor.

It carries out the reaction (S)-ureidoglycolate = urea + glyoxylate. It participates in nitrogen metabolism; (S)-allantoin degradation. Its function is as follows. Catalyzes the catabolism of the allantoin degradation intermediate (S)-ureidoglycolate, generating urea and glyoxylate. Involved in the utilization of allantoin as nitrogen source. The protein is Ureidoglycolate lyase of Pseudomonas fluorescens (strain SBW25).